Reading from the N-terminus, the 266-residue chain is MKCKFVFCLSFLVLAITNANIFLRNEADLEEKTLRIPKALTTMGVIKPDMKIKLKMEGNVNGHAFVIEGEGEGKPYDGTHTLNLEVKEGAPLPFSYDILSNAFQYGNRALTKYPDDIADYFKQSFPEGYSWERTMTFEDKGIVKVKSDISMEEDSFIYEIRFDGMNFPPNGPVMQKKTLKWEPSTEIMYVRDGVLVGDISHSLLLEGGGHYRCDFKSIYKAKKVVKLPDYHFVDHRIEILNHDKDYNKVTLYENAVARYSLLPSQA.

Residues 104–106 constitute a cross-link (2-iminomethyl-5-imidazolinone (Gln-Gly)); it reads QYG. At tyrosine 105 the chain carries 2,3-didehydrotyrosine.

The protein belongs to the GFP family. Contains a chromophore consisting of modified amino acid residues. The chromophore is formed by autocatalytic backbone condensation between Xaa-N and Gly-(N+2), oxidation of Tyr-(N+1) to didehydrotyrosine, and formation of a double bond to the alpha-amino nitrogen of residue Xaa-N. Maturation of the chromophore requires nothing other than molecular oxygen. The precise stereochemistry of the tyrosine has not been determined. As to expression, tentacle and oral disk.

Pigment protein that is green in color. The chain is GFP-like fluorescent chromoprotein cFP484 from Clavularia sp. (Brown star polyp).